Here is a 338-residue protein sequence, read N- to C-terminus: Formamidase (338 aa).

One can recognise a CN hydrolase domain in the interval 14 to 260 (LLIAAIQYPV…WEIVTAELFP (247 aa)). The Proton acceptor role is filled by Glu-60. Lys-133 functions as the Proton donor in the catalytic mechanism. Cys-166 acts as the Nucleophile in catalysis.

It belongs to the carbon-nitrogen hydrolase superfamily. Aliphatic amidase family.

The enzyme catalyses formamide + H2O = formate + NH4(+). In terms of biological role, is an aliphatic amidase with a restricted substrate specificity, as it only hydrolyzes formamide. This is Formamidase from Photorhabdus laumondii subsp. laumondii (strain DSM 15139 / CIP 105565 / TT01) (Photorhabdus luminescens subsp. laumondii).